A 157-amino-acid chain; its full sequence is Protein Smg (157 aa).

Belongs to the Smg family.

The sequence is that of Protein Smg from Buchnera aphidicola subsp. Schizaphis graminum (strain Sg).